The chain runs to 409 residues: Elongation factor Tu, chloroplastic (409 aa).

One can recognise a tr-type G domain in the interval Lys10–Glu214. Positions Gly19–Thr26 are G1. A GTP-binding site is contributed by Gly19 to Thr26. Residue Thr26 participates in Mg(2+) binding. The tract at residues Gly60–Asn64 is G2. The tract at residues Asp81 to Gly84 is G3. GTP contacts are provided by residues Asp81–His85 and Asn136–Asp139. The G4 stretch occupies residues Asn136–Asp139. The tract at residues Ser174–Leu176 is G5.

It belongs to the TRAFAC class translation factor GTPase superfamily. Classic translation factor GTPase family. EF-Tu/EF-1A subfamily.

The protein resides in the plastid. The protein localises to the chloroplast. It carries out the reaction GTP + H2O = GDP + phosphate + H(+). In terms of biological role, GTP hydrolase that promotes the GTP-dependent binding of aminoacyl-tRNA to the A-site of ribosomes during protein biosynthesis. This Rhodomonas salina (Cryptomonas salina) protein is Elongation factor Tu, chloroplastic (tufA).